Here is a 208-residue protein sequence, read N- to C-terminus: Proheparin-binding EGF-like growth factor (208 aa).

Residues 1-19 (MKLLPSVVLKLLLAAVLSA) form the signal peptide. A propeptide spanning residues 20 to 62 (LVTGESLEQLRRGLAAGTSNPDPSTGSTDQLLRLGGGRDRKVR) is cleaved from the precursor. Topologically, residues 20–160 (LVTGESLEQL…ENRLYTYDHT (141 aa)) are extracellular. The segment at 34-55 (AAGTSNPDPSTGSTDQLLRLGG) is disordered. Residues 36-49 (GTSNPDPSTGSTDQ) are compositionally biased toward polar residues. O-linked (GalNAc...) threonine glycosylation is found at T75 and T85. The tract at residues 81–104 (QALATPSKEEHGKRKKKGKGLGKK) is disordered. Residues 93–102 (KRKKKGKGLG) are compositionally biased toward basic residues. One can recognise an EGF-like domain in the interval 104–144 (KRDPCLRKYKDFCIHGECKYVKELRAPSCICHPGYHGERCH). 3 cysteine pairs are disulfide-bonded: C108–C121, C116–C132, and C134–C143. Residues 136–148 (PGYHGERCHGLSL) are toxin-binding domain. The propeptide at 149–208 (PVENRLYTYDHTTILAVVAVVLSSVCLLVIVGLLMFRYHRRGGYDVENEEKVKLGMTNSH) is C-terminal. A helical membrane pass occupies residues 161–184 (TILAVVAVVLSSVCLLVIVGLLMF). Topologically, residues 185 to 208 (RYHRRGGYDVENEEKVKLGMTNSH) are cytoplasmic.

As to quaternary structure, interacts with EGFR and ERBB4. Interacts with FBLN1. In terms of processing, O-glycosylated.

It is found in the secreted. It localises to the extracellular space. The protein localises to the cell membrane. Growth factor that mediates its effects via EGFR, ERBB2 and ERBB4. Required for normal cardiac valve formation and normal heart function. Promotes smooth muscle cell proliferation. May be involved in macrophage-mediated cellular proliferation. It is mitogenic for fibroblasts, but not endothelial cells. It is able to bind EGF receptor/EGFR with higher affinity than EGF itself and is a far more potent mitogen for smooth muscle cells than EGF. Also acts as a diphtheria toxin receptor. The polypeptide is Proheparin-binding EGF-like growth factor (HBEGF) (Chlorocebus aethiops (Green monkey)).